A 1065-amino-acid chain; its full sequence is Carbamoyl phosphate synthase large chain (1065 aa).

The carboxyphosphate synthetic domain stretch occupies residues methionine 1–glutamate 401. Arginine 129, arginine 169, glycine 175, glycine 176, lysine 208, isoleucine 210, glutamate 215, glycine 241, isoleucine 242, histidine 243, glutamine 284, and glutamate 298 together coordinate ATP. An ATP-grasp 1 domain is found at arginine 133–valine 327. Residues glutamine 284, glutamate 298, and asparagine 300 each contribute to the Mg(2+) site. Mn(2+) contacts are provided by glutamine 284, glutamate 298, and asparagine 300. Residues threonine 402–serine 546 form an oligomerization domain region. A carbamoyl phosphate synthetic domain region spans residues isoleucine 547–glycine 929. In terms of domain architecture, ATP-grasp 2 spans glutamate 671–leucine 861. ATP contacts are provided by arginine 707, arginine 746, leucine 748, glutamate 752, glycine 777, valine 778, histidine 779, serine 780, glutamine 820, and glutamate 832. Glutamine 820, glutamate 832, and asparagine 834 together coordinate Mg(2+). Positions 820, 832, and 834 each coordinate Mn(2+). The MGS-like domain occupies methionine 930–histidine 1065. Positions methionine 930 to histidine 1065 are allosteric domain.

The protein belongs to the CarB family. Composed of two chains; the small (or glutamine) chain promotes the hydrolysis of glutamine to ammonia, which is used by the large (or ammonia) chain to synthesize carbamoyl phosphate. Tetramer of heterodimers (alpha,beta)4. Requires Mg(2+) as cofactor. The cofactor is Mn(2+).

The catalysed reaction is hydrogencarbonate + L-glutamine + 2 ATP + H2O = carbamoyl phosphate + L-glutamate + 2 ADP + phosphate + 2 H(+). It catalyses the reaction hydrogencarbonate + NH4(+) + 2 ATP = carbamoyl phosphate + 2 ADP + phosphate + 2 H(+). The protein operates within amino-acid biosynthesis; L-arginine biosynthesis; carbamoyl phosphate from bicarbonate: step 1/1. It participates in pyrimidine metabolism; UMP biosynthesis via de novo pathway; (S)-dihydroorotate from bicarbonate: step 1/3. In terms of biological role, large subunit of the glutamine-dependent carbamoyl phosphate synthetase (CPSase). CPSase catalyzes the formation of carbamoyl phosphate from the ammonia moiety of glutamine, carbonate, and phosphate donated by ATP, constituting the first step of 2 biosynthetic pathways, one leading to arginine and/or urea and the other to pyrimidine nucleotides. The large subunit (synthetase) binds the substrates ammonia (free or transferred from glutamine from the small subunit), hydrogencarbonate and ATP and carries out an ATP-coupled ligase reaction, activating hydrogencarbonate by forming carboxy phosphate which reacts with ammonia to form carbamoyl phosphate. This Lysinibacillus sphaericus (strain C3-41) protein is Carbamoyl phosphate synthase large chain.